Consider the following 45-residue polypeptide: Peroxidase 3 (45 aa).

It belongs to the peroxidase family. Classical plant (class III) peroxidase subfamily. Heme b is required as a cofactor. It depends on Ca(2+) as a cofactor.

The protein localises to the secreted. It carries out the reaction 2 a phenolic donor + H2O2 = 2 a phenolic radical donor + 2 H2O. In terms of biological role, removal of H(2)O(2), oxidation of toxic reductants, biosynthesis and degradation of lignin, suberization, auxin catabolism, response to environmental stresses such as wounding, pathogen attack and oxidative stress. These functions might be dependent on each isozyme/isoform in each plant tissue. The sequence is that of Peroxidase 3 from Capsicum annuum (Capsicum pepper).